Consider the following 248-residue polypeptide: Uridylate kinase (248 aa).

11 to 14 (KISG) serves as a coordination point for ATP. Gly-53 contributes to the UMP binding site. The ATP site is built by Gly-54 and Arg-58. UMP-binding positions include Asp-74 and 135–142 (AGSPYLTT). Residues Thr-162, Tyr-169, and Asp-172 each contribute to the ATP site.

It belongs to the UMP kinase family. As to quaternary structure, homohexamer.

The protein localises to the cytoplasm. The enzyme catalyses UMP + ATP = UDP + ADP. Its pathway is pyrimidine metabolism; CTP biosynthesis via de novo pathway; UDP from UMP (UMPK route): step 1/1. Its activity is regulated as follows. Inhibited by UTP. Its function is as follows. Catalyzes the reversible phosphorylation of UMP to UDP. This Chlamydia pneumoniae (Chlamydophila pneumoniae) protein is Uridylate kinase.